Reading from the N-terminus, the 642-residue chain is Chaperone protein HtpG (642 aa).

Positions 1–349 are a; substrate-binding; that stretch reads MSAATETEVR…SADLPLNVSR (349 aa). The disordered stretch occupies residues 216-238; the sequence is ELPPAPPAKEGEEPEPPKTPEWE. Over residues 224–236 the composition is skewed to basic and acidic residues; the sequence is KEGEEPEPPKTPE. Residues 350 to 570 are b; the sequence is EILQQNRQVE…AHDMSATLER (221 aa). The tract at residues 571 to 642 is c; it reads LLKEAGQEVP…VKRLNKLLMG (72 aa).

It belongs to the heat shock protein 90 family. As to quaternary structure, homodimer.

The protein resides in the cytoplasm. Its function is as follows. Molecular chaperone. Has ATPase activity. The chain is Chaperone protein HtpG from Magnetococcus marinus (strain ATCC BAA-1437 / JCM 17883 / MC-1).